We begin with the raw amino-acid sequence, 339 residues long: uncharacterized protein (339 aa).

The signal sequence occupies residues 1–29; that stretch reads MIKQVCKNITICSLALSTALTVFPASSYA.

The protein belongs to the aerolysin family.

This is an uncharacterized protein from Staphylococcus aureus (strain MRSA252).